The sequence spans 431 residues: Na(+)/H(+) antiporter NhaA 1 (431 aa).

Transmembrane regions (helical) follow at residues L17 to F37, F56 to L76, M98 to L118, F123 to L143, L154 to V174, E182 to V202, L209 to A229, F301 to F321, M329 to F349, V373 to I393, and A400 to I420.

This sequence belongs to the NhaA Na(+)/H(+) (TC 2.A.33) antiporter family.

It localises to the cell inner membrane. It catalyses the reaction Na(+)(in) + 2 H(+)(out) = Na(+)(out) + 2 H(+)(in). Na(+)/H(+) antiporter that extrudes sodium in exchange for external protons. The protein is Na(+)/H(+) antiporter NhaA 1 of Aliarcobacter butzleri (strain RM4018) (Arcobacter butzleri).